Consider the following 86-residue polypeptide: Putative pro-MCH-like protein 2 (86 aa).

Positions 31 to 49 (GSVAFPAENGVQDTESTLE) are NGE-like. The interval 40-60 (GVQDTESTLEKRETGDEENSA) is disordered. The tract at residues 52-64 (ETGDEENSAKFPI) is NEI-like. Residues 68 to 86 (DFDTLRCMLGRVYQRCWQV) form a melanin-concentrating hormone-like region.

The protein belongs to the melanin-concentrating hormone family. In terms of tissue distribution, expressed in testis but not in brain.

This Homo sapiens (Human) protein is Putative pro-MCH-like protein 2 (PMCHL2).